The sequence spans 614 residues: Dihydroxy-acid dehydratase (614 aa).

Asp-81 serves as a coordination point for Mg(2+). Cys-122 contacts [2Fe-2S] cluster. Mg(2+) contacts are provided by Asp-123 and Lys-124. The residue at position 124 (Lys-124) is an N6-carboxylysine. Cys-195 serves as a coordination point for [2Fe-2S] cluster. Glu-491 lines the Mg(2+) pocket. Ser-517 serves as the catalytic Proton acceptor.

It belongs to the IlvD/Edd family. In terms of assembly, homodimer. It depends on [2Fe-2S] cluster as a cofactor. Requires Mg(2+) as cofactor.

It carries out the reaction (2R)-2,3-dihydroxy-3-methylbutanoate = 3-methyl-2-oxobutanoate + H2O. The catalysed reaction is (2R,3R)-2,3-dihydroxy-3-methylpentanoate = (S)-3-methyl-2-oxopentanoate + H2O. Its pathway is amino-acid biosynthesis; L-isoleucine biosynthesis; L-isoleucine from 2-oxobutanoate: step 3/4. The protein operates within amino-acid biosynthesis; L-valine biosynthesis; L-valine from pyruvate: step 3/4. Functionally, functions in the biosynthesis of branched-chain amino acids. Catalyzes the dehydration of (2R,3R)-2,3-dihydroxy-3-methylpentanoate (2,3-dihydroxy-3-methylvalerate) into 2-oxo-3-methylpentanoate (2-oxo-3-methylvalerate) and of (2R)-2,3-dihydroxy-3-methylbutanoate (2,3-dihydroxyisovalerate) into 2-oxo-3-methylbutanoate (2-oxoisovalerate), the penultimate precursor to L-isoleucine and L-valine, respectively. This Rhodopseudomonas palustris (strain BisA53) protein is Dihydroxy-acid dehydratase.